We begin with the raw amino-acid sequence, 476 residues long: Proline--tRNA ligase 2 (476 aa).

It belongs to the class-II aminoacyl-tRNA synthetase family. ProS type 3 subfamily. As to quaternary structure, homodimer.

The protein resides in the cytoplasm. It carries out the reaction tRNA(Pro) + L-proline + ATP = L-prolyl-tRNA(Pro) + AMP + diphosphate. In terms of biological role, catalyzes the attachment of proline to tRNA(Pro) in a two-step reaction: proline is first activated by ATP to form Pro-AMP and then transferred to the acceptor end of tRNA(Pro). The sequence is that of Proline--tRNA ligase 2 from Bacillus thuringiensis (strain Al Hakam).